The following is a 330-amino-acid chain: Protein-lysine N-methyltransferase EEF2KMT (330 aa).

M1 carries the post-translational modification N-acetylmethionine. Residues W139, 165-167 (GSG), W228, and A247 contribute to the S-adenosyl-L-methionine site.

It belongs to the class I-like SAM-binding methyltransferase superfamily. EEF2KMT family. As to quaternary structure, interacts with FAM86B2 and FAM86C1P.

It is found in the cytoplasm. It catalyses the reaction L-lysyl-[protein] + 3 S-adenosyl-L-methionine = N(6),N(6),N(6)-trimethyl-L-lysyl-[protein] + 3 S-adenosyl-L-homocysteine + 3 H(+). Functionally, catalyzes the trimethylation of eukaryotic elongation factor 2 (EEF2) on 'Lys-525'. This chain is Protein-lysine N-methyltransferase EEF2KMT, found in Homo sapiens (Human).